A 178-amino-acid polypeptide reads, in one-letter code: CASP-like protein 2U3 (178 aa).

The Cytoplasmic portion of the chain corresponds to 1–4 (MACR). Residues 5–25 (VMEVLLRVLAILLSIAGALVM) form a helical membrane-spanning segment. Over 26 to 52 (AKDKQDTFVMLGTVPVPLYARHSYVEA) the chain is Extracellular. Residues 53 to 73 (FVFLVYANGIVAIYCFIAVLL) traverse the membrane as a helical segment. The Cytoplasmic portion of the chain corresponds to 74-80 (SLLAKSR). The chain crosses the membrane as a helical span at residues 81–101 (VLAGLLFFMDQALAYLLLAAA). The Extracellular segment spans residues 102-132 (AASTEVAYIAKRGEKKLVWGEVCSNFEHFCN). Residues 133–153 (LVGVSLVLTFLSVLVLVTLAI) form a helical membrane-spanning segment. At 154–178 (LSGKRLFGHPPLCAPPSTPPVHQGV) the chain is on the cytoplasmic side.

The protein belongs to the Casparian strip membrane proteins (CASP) family. In terms of assembly, homodimer and heterodimers.

The protein resides in the cell membrane. The polypeptide is CASP-like protein 2U3 (Pteridium aquilinum subsp. aquilinum (Bracken fern)).